A 303-amino-acid chain; its full sequence is MYYGFDIGGTKIALGVFDSGRQLQWEKRVPTPRDSYDAFLDAVCELVAEADQRFGCKGSVGIGIPGMPETEDGTLYAANVPAASGQPLRADLSARLDRDVRLDNDANCFALSEAWDDEFTQYPLVMGLILGTGVGGGLIFNGKPITGKSYITGEFGHMRLPVDALTMMGLDFPLRRCGCGQHGCIENYLSGRGFAWLYQHYYHQPLQAPEIIALYDQGDEQARAHVERYLDLLAVCLGNILTIVDPDLVVIGGGLSNFPAITTQLADRLPRHLLPVARVPRIERARHGDAGGMRGAAFLHLTD.

Residues 4-11 (GFDIGGTK) and 133-140 (GVGGGLIF) contribute to the ATP site. Residues His-157, Cys-177, Cys-179, and Cys-184 each coordinate Zn(2+).

It belongs to the ROK (NagC/XylR) family. NagK subfamily.

The enzyme catalyses N-acetyl-D-glucosamine + ATP = N-acetyl-D-glucosamine 6-phosphate + ADP + H(+). It functions in the pathway cell wall biogenesis; peptidoglycan recycling. Catalyzes the phosphorylation of N-acetyl-D-glucosamine (GlcNAc) derived from cell-wall degradation, yielding GlcNAc-6-P. The sequence is that of N-acetyl-D-glucosamine kinase from Escherichia coli O139:H28 (strain E24377A / ETEC).